Reading from the N-terminus, the 30-residue chain is Sillucin (30 aa).

Disulfide bonds link Cys-2-Cys-7, Cys-12-Cys-24, Cys-13-Cys-30, and Cys-14-Cys-21.

Its subcellular location is the secreted. In terms of biological role, sillucin is an antimicrobial agent produced by the thermophilic fungus Rhizomucor pusillus in liquid culture; it is effective against Gram-positive bacteria at the level of RNA metabolism. The protein is Sillucin of Rhizomucor pusillus.